The primary structure comprises 417 residues: Serine hydroxymethyltransferase (417 aa).

(6S)-5,6,7,8-tetrahydrofolate-binding positions include L122 and 126–128 (GHL). K231 bears the N6-(pyridoxal phosphate)lysine mark.

Belongs to the SHMT family. As to quaternary structure, homodimer. Pyridoxal 5'-phosphate is required as a cofactor.

The protein resides in the cytoplasm. It catalyses the reaction (6R)-5,10-methylene-5,6,7,8-tetrahydrofolate + glycine + H2O = (6S)-5,6,7,8-tetrahydrofolate + L-serine. It functions in the pathway one-carbon metabolism; tetrahydrofolate interconversion. The protein operates within amino-acid biosynthesis; glycine biosynthesis; glycine from L-serine: step 1/1. Its function is as follows. Catalyzes the reversible interconversion of serine and glycine with tetrahydrofolate (THF) serving as the one-carbon carrier. This reaction serves as the major source of one-carbon groups required for the biosynthesis of purines, thymidylate, methionine, and other important biomolecules. Also exhibits THF-independent aldolase activity toward beta-hydroxyamino acids, producing glycine and aldehydes, via a retro-aldol mechanism. This chain is Serine hydroxymethyltransferase, found in Caldicellulosiruptor saccharolyticus (strain ATCC 43494 / DSM 8903 / Tp8T 6331).